Consider the following 339-residue polypeptide: MKIMVAMSGGVDSTMTAKILKEAGHEIEGCYMKLHQKPGYHEENIRKVKKVGEYLGIKVHILDLQDKFNEFVYDPFVRLYKEGKTPNPCALCNRFIKLGALLNFAKQNGCEKLATGHYVQIIDGFVTMAKDPSKDQSYFLAQVPKEVLKDVIFPLGDKFKADIKELAREVPVLNEFATQPESSEICFVEDTYIEILNKHYNTNLPGNVVDKNGNVIGRHQGYMHYTIGKRRGFEVFGAHEPHFVLKINADKNEIVVGSKDDLAQKIVELENVNLFIDEDEFECETKIRYRSPKLEASVKIDKQNKTAVVALSQNALGVAQGQLCVMYDGERVIASGFIK.

ATP is bound by residues 6–13 (AMSGGVDS) and Met-32. Residue Cys-92 is the Nucleophile of the active site. Cys-92 and Cys-186 are oxidised to a cystine. Gly-116 is an ATP binding site. Residues 134 to 136 (KDQ) are interaction with tRNA. Cys-186 serves as the catalytic Cysteine persulfide intermediate. Residues 288 to 289 (RY) are interaction with tRNA.

It belongs to the MnmA/TRMU family.

The protein localises to the cytoplasm. It catalyses the reaction S-sulfanyl-L-cysteinyl-[protein] + uridine(34) in tRNA + AH2 + ATP = 2-thiouridine(34) in tRNA + L-cysteinyl-[protein] + A + AMP + diphosphate + H(+). Its function is as follows. Catalyzes the 2-thiolation of uridine at the wobble position (U34) of tRNA, leading to the formation of s(2)U34. The sequence is that of tRNA-specific 2-thiouridylase MnmA from Campylobacter curvus (strain 525.92).